The primary structure comprises 558 residues: Formate--tetrahydrofolate ligase (558 aa).

An ATP-binding site is contributed by threonine 66–threonine 73.

Belongs to the formate--tetrahydrofolate ligase family.

The catalysed reaction is (6S)-5,6,7,8-tetrahydrofolate + formate + ATP = (6R)-10-formyltetrahydrofolate + ADP + phosphate. It participates in one-carbon metabolism; tetrahydrofolate interconversion. This chain is Formate--tetrahydrofolate ligase, found in Neisseria gonorrhoeae (strain ATCC 700825 / FA 1090).